The sequence spans 178 residues: CDP-archaeol synthase (178 aa).

The next 5 helical transmembrane spans lie at 3-23 (LLLL…ANAV), 56-76 (FFGI…VILY), 87-107 (LFGY…GDML), 123-145 (APIL…FYPL), and 150-169 (IVLL…IIAY).

The protein belongs to the CDP-archaeol synthase family. Mg(2+) is required as a cofactor.

Its subcellular location is the cell membrane. The catalysed reaction is 2,3-bis-O-(geranylgeranyl)-sn-glycerol 1-phosphate + CTP + H(+) = CDP-2,3-bis-O-(geranylgeranyl)-sn-glycerol + diphosphate. The protein operates within membrane lipid metabolism; glycerophospholipid metabolism. Functionally, catalyzes the formation of CDP-2,3-bis-(O-geranylgeranyl)-sn-glycerol (CDP-archaeol) from 2,3-bis-(O-geranylgeranyl)-sn-glycerol 1-phosphate (DGGGP) and CTP. This reaction is the third ether-bond-formation step in the biosynthesis of archaeal membrane lipids. The sequence is that of CDP-archaeol synthase from Methanococcus maripaludis (strain C6 / ATCC BAA-1332).